Here is a 186-residue protein sequence, read N- to C-terminus: uncharacterized protein (186 aa).

The disordered stretch occupies residues 156-186 (DTKELERTTQPPEHQKHHQEPREKRGMNKRD). A compositionally biased stretch (basic and acidic residues) spans 173-186 (HQEPREKRGMNKRD).

This is an uncharacterized protein from Bacillus subtilis (strain 168).